The sequence spans 354 residues: Histidinol-phosphate aminotransferase (354 aa).

Lysine 210 carries the N6-(pyridoxal phosphate)lysine modification.

The protein belongs to the class-II pyridoxal-phosphate-dependent aminotransferase family. Histidinol-phosphate aminotransferase subfamily. Homodimer. Pyridoxal 5'-phosphate is required as a cofactor.

It carries out the reaction L-histidinol phosphate + 2-oxoglutarate = 3-(imidazol-4-yl)-2-oxopropyl phosphate + L-glutamate. It functions in the pathway amino-acid biosynthesis; L-histidine biosynthesis; L-histidine from 5-phospho-alpha-D-ribose 1-diphosphate: step 7/9. This is Histidinol-phosphate aminotransferase from Clostridium botulinum (strain Langeland / NCTC 10281 / Type F).